The following is a 116-amino-acid chain: Putative pterin-4-alpha-carbinolamine dehydratase (116 aa).

This sequence belongs to the pterin-4-alpha-carbinolamine dehydratase family.

It catalyses the reaction (4aS,6R)-4a-hydroxy-L-erythro-5,6,7,8-tetrahydrobiopterin = (6R)-L-erythro-6,7-dihydrobiopterin + H2O. This chain is Putative pterin-4-alpha-carbinolamine dehydratase, found in Stenotrophomonas maltophilia (strain R551-3).